Here is a 532-residue protein sequence, read N- to C-terminus: Invertase 1 (532 aa).

The N-terminal stretch at 1 to 19 (MLLQAFLFLLAGFAAKISA) is a signal peptide. Asn23 carries N-linked (GlcNAc...) asparagine glycosylation. Residues 39 to 42 (WMND) and Gln60 contribute to the substrate site. The active site involves Asp42. N-linked (GlcNAc...) asparagine glycosylation occurs at Asn64. 102-103 (YS) is a substrate binding site. Residues Asn111, Asn112, Asn118, and Asn165 are each glycosylated (N-linked (GlcNAc...) asparagine). Substrate-binding positions include 170–171 (RD) and Glu223. N-linked (GlcNAc...) asparagine glycosylation occurs at Asn275. Trp311 serves as a coordination point for substrate. N-linked (GlcNAc...) asparagine glycans are attached at residues Asn356, Asn369, Asn384, Asn398, and Asn512.

The protein belongs to the glycosyl hydrolase 32 family. Isoform Secreted is glycosylated. Isoform Intracellular is not glycosylated.

The protein resides in the cytoplasm. It is found in the secreted. The catalysed reaction is Hydrolysis of terminal non-reducing beta-D-fructofuranoside residues in beta-D-fructofuranosides.. The chain is Invertase 1 (SUC1) from Saccharomyces cerevisiae (Baker's yeast).